Reading from the N-terminus, the 354-residue chain is Thiamine thiazole synthase 1, chloroplastic (354 aa).

The transit peptide at 1-45 (MATAAASSLLKSSFAGSRLPAATRTTPASLVVATGPRGAGAGPIC) directs the protein to the chloroplast. Substrate-binding positions include Ala-100, 120-121 (EQ), Gly-128, and Val-193. Position 222 is a 2,3-didehydroalanine (Cys) (Cys-222). Substrate-binding positions include Asp-224, His-239, Met-291, and 301–303 (RMG).

Belongs to the THI4 family. Homooctamer. Requires Fe cation as cofactor. In terms of processing, during the catalytic reaction, a sulfide is transferred from Cys-222 to a reaction intermediate, generating a dehydroalanine residue. As to expression, highest expression in developing embryos and green leaves and a very low level expression seen in endosperm, roots, etiolated shoots and immature ears.

Its subcellular location is the plastid. The protein resides in the chloroplast. The catalysed reaction is [ADP-thiazole synthase]-L-cysteine + glycine + NAD(+) = [ADP-thiazole synthase]-dehydroalanine + ADP-5-ethyl-4-methylthiazole-2-carboxylate + nicotinamide + 3 H2O + 2 H(+). Functionally, involved in biosynthesis of the thiamine precursor thiazole. Catalyzes the conversion of NAD and glycine to adenosine diphosphate 5-(2-hydroxyethyl)-4-methylthiazole-2-carboxylic acid (ADT), an adenylated thiazole intermediate. The reaction includes an iron-dependent sulfide transfer from a conserved cysteine residue of the protein to a thiazole intermediate. The enzyme can only undergo a single turnover, which suggests it is a suicide enzyme. May have additional roles in adaptation to various stress conditions and in DNA damage tolerance. This is Thiamine thiazole synthase 1, chloroplastic from Zea mays (Maize).